The primary structure comprises 889 residues: Oxysterol-binding protein-related protein 8 (889 aa).

Met1 carries the N-acetylmethionine modification. The interval 1 to 129 is disordered; that stretch reads MEGGLADGEP…SLKVQKKNYR (129 aa). Ser14 carries the phosphoserine modification. Composition is skewed to polar residues over residues 28–46 and 62–71; these read VVAN…MSQR and PSLSPASPHS. Residues Ser65 and Ser68 each carry the phosphoserine modification. 3 stretches are compositionally biased toward basic and acidic residues: residues 73–88, 95–109, and 116–129; these read GFER…KDES, SKSE…EKDS, and TKKE…KNYR. Residues 148-265 enclose the PH domain; sequence VIVMADWLKI…WMDALELALK (118 aa). Residues Ser314, Ser328, and Ser342 each carry the phosphoserine modification. A compositionally biased stretch (basic and acidic residues) spans 322–336; that stretch reads KDQDMYSDKSDKEND. The segment at 322–399 is disordered; it reads KDQDMYSDKS…AGEASQTETV (78 aa). Residues 346-363 are compositionally biased toward basic and acidic residues; the sequence is VMGKSEESDTDTSERQDD. Residues 420–425, 482–485, and 514–515 each bind a 1,2-diacyl-sn-glycero-3-phospho-(1D-myo-inositol 4-phosphate); these read LSKVVL, KPYN, and HH. A 1,2-diacyl-sn-glycero-3-phospho-L-serine-binding positions include 420-425 and Asn485; that span reads LSKVVL. Ser540 contacts a 1,2-diacyl-sn-glycero-3-phospho-L-serine. Lys706, Glu710, and Arg714 together coordinate a 1,2-diacyl-sn-glycero-3-phospho-(1D-myo-inositol 4-phosphate). A disordered region spans residues 771-823; that stretch reads KHRTPMVSVPKMKHKPTRQQKKVAKGYSSPEPDIQDSSGSEAQSVKPSTRRKK. The segment covering 781-794 has biased composition (basic residues); it reads KMKHKPTRQQKKVA. Over residues 805-817 the composition is skewed to polar residues; sequence QDSSGSEAQSVKP. A phosphoserine mark is found at Ser807, Ser808, Ser810, and Ser814. Residues 871-888 traverse the membrane as a helical segment; the sequence is YFIIFLLILLQVIINFMF.

It belongs to the OSBP family. Interacts with SPAG5. Interacts with NUP62. Widely expressed. Expressed at higher level in macrophages.

It is found in the endoplasmic reticulum membrane. Its subcellular location is the nucleus membrane. Functionally, lipid transporter involved in lipid countertransport between the endoplasmic reticulum and the plasma membrane: specifically exchanges phosphatidylserine with phosphatidylinositol 4-phosphate (PI4P), delivering phosphatidylserine to the plasma membrane in exchange for PI4P, which is degraded by the SAC1/SACM1L phosphatase in the endoplasmic reticulum. Binds phosphatidylserine and PI4P in a mutually exclusive manner. Binds oxysterol, 25-hydroxycholesterol and cholesterol. The polypeptide is Oxysterol-binding protein-related protein 8 (OSBPL8) (Homo sapiens (Human)).